We begin with the raw amino-acid sequence, 87 residues long: Chaperone NapD (87 aa).

This sequence belongs to the NapD family. In terms of assembly, interacts with the cytoplasmic NapA precursor.

Its subcellular location is the cytoplasm. In terms of biological role, chaperone for NapA, the catalytic subunit of the periplasmic nitrate reductase. It binds directly and specifically to the twin-arginine signal peptide of NapA, preventing premature interaction with the Tat translocase and premature export. The polypeptide is Chaperone NapD (Escherichia coli O157:H7).